We begin with the raw amino-acid sequence, 116 residues long: Phosphoribosyl-AMP cyclohydrolase (116 aa).

D81 lines the Mg(2+) pocket. C82 contributes to the Zn(2+) binding site. 2 residues coordinate Mg(2+): D83 and D85. Zn(2+)-binding residues include C98 and C105.

This sequence belongs to the PRA-CH family. Homodimer. Mg(2+) is required as a cofactor. It depends on Zn(2+) as a cofactor.

Its subcellular location is the cytoplasm. The enzyme catalyses 1-(5-phospho-beta-D-ribosyl)-5'-AMP + H2O = 1-(5-phospho-beta-D-ribosyl)-5-[(5-phospho-beta-D-ribosylamino)methylideneamino]imidazole-4-carboxamide. It participates in amino-acid biosynthesis; L-histidine biosynthesis; L-histidine from 5-phospho-alpha-D-ribose 1-diphosphate: step 3/9. In terms of biological role, catalyzes the hydrolysis of the adenine ring of phosphoribosyl-AMP. The chain is Phosphoribosyl-AMP cyclohydrolase from Mycolicibacterium vanbaalenii (strain DSM 7251 / JCM 13017 / BCRC 16820 / KCTC 9966 / NRRL B-24157 / PYR-1) (Mycobacterium vanbaalenii).